A 261-amino-acid chain; its full sequence is X-box-binding protein 1 (261 aa).

The Cytoplasmic segment spans residues 1 to 185 (MVVVAAAPNP…VQAQLSPLQN (185 aa)). A disordered region spans residues 44 to 93 (RGASPEAASGGLPQARKRQRLTHLSPEEKALRRKLKNRVAAQTARDRKKA). A phosphoserine mark is found at serine 47 and serine 68. Residues 70–133 (EEKALRRKLK…HGLVVENQEL (64 aa)) form the bZIP domain. Residues 72–94 (KALRRKLKNRVAAQTARDRKKAR) form a basic motif region. The segment at 75-92 (RRKLKNRVAAQTARDRKK) is nuclear localization signal (NLS); in isoforms 1 and isoform 2. Residues 98–133 (LEQQVVDLEEENQKLLLENQLLREKTHGLVVENQEL) are leucine-zipper. The chain crosses the membrane as a helical; Signal-anchor for type II membrane protein span at residues 186–203 (ISPWILAVLTLQIQSLIS). Topologically, residues 204-261 (CWAFWTTWTQSCSSNALPQSLPAWRSSQRSTQKDPVPYQPPFLCQWGRHQPSWKPLMN) are lumenal. The tract at residues 235 to 261 (QKDPVPYQPPFLCQWGRHQPSWKPLMN) is necessary for the translational pausing of its own mRNA.

Belongs to the bZIP family. As to quaternary structure, isoform 2 interacts with SIRT1. Isoform 2 interacts with PIK3R1 and PIK3R2; the interactions are direct and induce translocation of XBP1 isoform 2 into the nucleus and the unfolded protein response (UPR) XBP1-dependent target genes activation in a ER stress- and/or insulin-dependent but PI3K-independent manner. Isoform 2 interacts with FOXO1; the interaction is direct and leads to FOXO1 ubiquitination and degradation via the proteasome pathway in hepatocytes. Isoform 1 interacts with HM13. Isoform 1 interacts with RNF139; the interaction induces ubiquitination and degradation of isoform 1. Isoform 1 interacts (via luminal domain) with DERL1; the interaction obviates the need for ectodomain shedding prior HM13/SPP-mediated XBP1 isoform 1 cleavage. Isoform 1 interacts with isoform 2; the interaction sequesters isoform 2 from the nucleus and enhances isoform 2 degradation in the cytoplasm. Isoform 1 interacts with HDAC3 and AKT1; the interactions occur in endothelial cell (EC) under disturbed flow. Isoform 1 interacts with the oncoprotein FOS. Isoform 2 interacts with ATF6; the interaction occurs in a ER stress-dependent manner and is required for DNA binding to the unfolded protein response element (UPRE). Isoform 2 interacts with PIK3R1; the interaction is direct and induces translocation of XBP1 isoform 2 into the nucleus and the unfolded protein response (UPR) XBP1-dependent target genes activation in a ER stress- and/or insulin-dependent but PI3K-independent manner. In terms of processing, acetylated by EP300; acetylation positively regulates the transcriptional activity of XBP1 isoform 2. Isoform 2 is deacetylated by SIRT1; deacetylation negatively regulates the transcriptional activity of XBP1 isoform 2. Ubiquitinated, leading to proteasome-mediated degradation in response to ER stress. Post-translationally, X-box-binding protein 1, cytoplasmic form and luminal form are produced by intramembrane proteolytic cleavage of ER membrane-anchored isoform 1 triggered by HM13/SPP in a DERL1-RNF139-dependent and VCP/p97-independent manner. X-box-binding protein 1, luminal form is ubiquitinated leading to proteasomal degradation. In terms of tissue distribution, expressed in plasma cells in rheumatoid synovium. Over-expressed in primary breast cancer and metastatic breast cancer cells. Isoform 1 and isoform 2 are expressed at higher level in proliferating as compared to confluent quiescent endothelial cells.

The protein localises to the endoplasmic reticulum. It localises to the nucleus. Its subcellular location is the cytoplasm. It is found in the endoplasmic reticulum membrane. The protein resides in the membrane. Its function is as follows. Functions as a transcription factor during endoplasmic reticulum (ER) stress by regulating the unfolded protein response (UPR). Required for cardiac myogenesis and hepatogenesis during embryonic development, and the development of secretory tissues such as exocrine pancreas and salivary gland. Involved in terminal differentiation of B lymphocytes to plasma cells and production of immunoglobulins. Modulates the cellular response to ER stress in a PIK3R-dependent manner. Binds to the cis-acting X box present in the promoter regions of major histocompatibility complex class II genes. Involved in VEGF-induced endothelial cell (EC) proliferation and retinal blood vessel formation during embryonic development but also for angiogenesis in adult tissues under ischemic conditions. Also functions as a major regulator of the UPR in obesity-induced insulin resistance and type 2 diabetes for the management of obesity and diabetes prevention. Functionally, plays a role in the unconventional cytoplasmic splicing processing of its own mRNA triggered by the endoplasmic reticulum (ER) transmembrane endoribonuclease ERN1: upon ER stress, the emerging XBP1 polypeptide chain, as part of a mRNA-ribosome-nascent chain (R-RNC) complex, cotranslationally recruits its own unprocessed mRNA through transient docking to the ER membrane and translational pausing, therefore facilitating efficient IRE1-mediated XBP1 mRNA isoform 2 production. In endothelial cells (EC), associated with KDR, promotes IRE1-mediated XBP1 mRNA isoform 2 productions in a vascular endothelial growth factor (VEGF)-dependent manner, leading to EC proliferation and angiogenesis. Functions as a negative feed-back regulator of the potent transcription factor XBP1 isoform 2 protein levels through proteasome-mediated degradation, thus preventing the constitutive activation of the ER stress response signaling pathway. Inhibits the transactivation activity of XBP1 isoform 2 in myeloma cells. Acts as a weak transcriptional factor. Together with HDAC3, contributes to the activation of NFE2L2-mediated HMOX1 transcription factor gene expression in a PI(3)K/mTORC2/Akt-dependent signaling pathway leading to EC survival under disturbed flow/oxidative stress. Binds to the ER stress response element (ERSE) upon ER stress. Binds to the consensus 5'-GATGACGTG[TG]N(3)[AT]T-3' sequence related to cAMP responsive element (CRE)-like sequences. Binds the Tax-responsive element (TRE) present in the long terminal repeat (LTR) of T-cell leukemia virus type 1 (HTLV-I) and to the TPA response elements (TRE). Associates preferentially to the HDAC3 gene promoter region in a static flow-dependent manner. Binds to the CDH5/VE-cadherin gene promoter region. In terms of biological role, functions as a stress-inducible potent transcriptional activator during endoplasmic reticulum (ER) stress by inducing unfolded protein response (UPR) target genes via binding to the UPR element (UPRE). Up-regulates target genes encoding ER chaperones and ER-associated degradation (ERAD) components to enhance the capacity of productive folding and degradation mechanism, respectively, in order to maintain the homeostasis of the ER under ER stress. Plays a role in the production of immunoglobulins and interleukin-6 in the presence of stimuli required for plasma cell differentiation. Induces phospholipid biosynthesis and ER expansion. Contributes to the VEGF-induced endothelial cell (EC) growth and proliferation in a Akt/GSK-dependent and/or -independent signaling pathway, respectively, leading to beta-catenin nuclear translocation and E2F2 gene expression. Promotes umbilical vein EC apoptosis and atherosclerotisis development in a caspase-dependent signaling pathway, and contributes to VEGF-induced EC proliferation and angiogenesis in adult tissues under ischemic conditions. Involved in the regulation of endostatin-induced autophagy in EC through BECN1 transcriptional activation. Plays a role as an oncogene by promoting tumor progression: stimulates zinc finger protein SNAI1 transcription to induce epithelial-to-mesenchymal (EMT) transition, cell migration and invasion of breast cancer cells. Involved in adipocyte differentiation by regulating lipogenic gene expression during lactation. Plays a role in the survival of both dopaminergic neurons of the substantia nigra pars compacta (SNpc), by maintaining protein homeostasis and of myeloma cells. Increases insulin sensitivity in the liver as a response to a high carbohydrate diet, resulting in improved glucose tolerance. Also improves glucose homeostasis in an ER stress- and/or insulin-independent manner through both binding and proteasome-induced degradation of the transcription factor FOXO1, hence resulting in suppression of gluconeogenic genes expression and in a reduction of blood glucose levels. Controls the induction of de novo fatty acid synthesis in hepatocytes by regulating the expression of a subset of lipogenic genes in an ER stress- and UPR-independent manner. Associates preferentially to the HDAC3 gene promoter region in a disturbed flow-dependent manner. Binds to the BECN1 gene promoter region. Binds to the CDH5/VE-cadherin gene promoter region. Binds to the ER stress response element (ERSE) upon ER stress. Binds to the 5'-CCACG-3' motif in the PPARG promoter. The polypeptide is X-box-binding protein 1 (Homo sapiens (Human)).